Consider the following 179-residue polypeptide: Inosine/xanthosine triphosphatase (179 aa).

Substrate-binding positions include T8–K13 and E68–A69. E68 lines the Mg(2+) pocket.

This sequence belongs to the YjjX NTPase family. As to quaternary structure, homodimer. Requires Mg(2+) as cofactor. Mn(2+) is required as a cofactor.

The catalysed reaction is XTP + H2O = XDP + phosphate + H(+). The enzyme catalyses ITP + H2O = IDP + phosphate + H(+). Its function is as follows. Phosphatase that hydrolyzes non-canonical purine nucleotides such as XTP and ITP to their respective diphosphate derivatives. Probably excludes non-canonical purines from DNA/RNA precursor pool, thus preventing their incorporation into DNA/RNA and avoiding chromosomal lesions. This Serratia proteamaculans (strain 568) protein is Inosine/xanthosine triphosphatase.